The primary structure comprises 213 residues: Anti-sigma-E factor ChrR (213 aa).

A sufficient to bind sigma factor and inhibit its activity region spans residues 2 to 85 (TIRHHVSDAL…QIQRPAPARR (84 aa)). Zn(2+)-binding residues include His6, His31, Cys35, Cys38, His141, His143, Glu147, and His177. The required for response to singlet oxygen stretch occupies residues 86–194 (ADPRAPAPLA…LDCICLAATD (109 aa)).

Belongs to the zinc-associated anti-sigma factor (ZAS) superfamily. In terms of assembly, forms a 1:1 complex with cognate ECF RNA polymerase sigma factor RpoE; this inhibits the interaction of RpoE with the RNA polymerase catalytic core. The cofactor is Zn(2+).

Its function is as follows. Anti-sigma factor that inhibits the activity of the extracytoplasmic function (ECF) sigma-E factor (RpoE), thereby indirectly regulating the transcription of the cycA and rpoE genes. ECF sigma factors are held in an inactive form by a cognate anti-sigma factor. This is Anti-sigma-E factor ChrR (chrR) from Cereibacter sphaeroides (strain ATCC 17023 / DSM 158 / JCM 6121 / CCUG 31486 / LMG 2827 / NBRC 12203 / NCIMB 8253 / ATH 2.4.1.) (Rhodobacter sphaeroides).